The chain runs to 529 residues: Pheophorbide a oxygenase, chloroplastic (529 aa).

Disordered regions lie at residues M1–P24 and L46–A72. A chloroplast-targeting transit peptide spans M1–R47. The 113-residue stretch at W82–V194 folds into the Rieske domain. The [2Fe-2S] cluster site is built by C124, H126, C144, and H147.

[2Fe-2S] cluster is required as a cofactor. Expressed in leaves. Expressed at low levels in roots, stems, panicles and seeds.

The protein resides in the plastid. It localises to the chloroplast. It carries out the reaction pheophorbide a + 2 reduced [2Fe-2S]-[ferredoxin] + O2 + 2 H(+) = red chlorophyll catabolite + 2 oxidized [2Fe-2S]-[ferredoxin]. It participates in porphyrin-containing compound metabolism; chlorophyll degradation. Functionally, catalyzes the key reaction of chlorophyll catabolism, porphyrin macrocycle cleavage of pheophorbide a (pheide a) to a primary fluorescent catabolite (pFCC). Works in a two-step reaction with red chlorophyll catabolite reductase (RCCR). Creates the intermediate RCC through the opening of the porphyrin macrocycle by the introduction of one atom of molecular oxygen at the alpha-methine bridge. Seems to be specific for pheide a. Belongs to the chlorophyll catabolic enzymes (CCEs). May play a role in senescence and response to wounding. This chain is Pheophorbide a oxygenase, chloroplastic, found in Oryza sativa subsp. japonica (Rice).